The chain runs to 455 residues: Histone chaperone RTT106 (455 aa).

Ser-2 is subject to N-acetylserine. Residues 2–67 (SKLFLDELPE…SSDLLKTDEI (66 aa)) are dimeric region. PH domains lie at 68 to 200 (SETN…GFKI) and 217 to 301 (INSF…VKRK). Residues 68-301 (SETNTIFKLE…AKIDDYVKRK (234 aa)) form a double PH domain region. Over residues 305-314 (DKSMSEELKA) the composition is skewed to basic and acidic residues. Positions 305–455 (DKSMSEELKA…DEDGSGVEYD (151 aa)) are disordered. Residues 319-339 (KGQATDGTADQPSILQEATRQ) show a composition bias toward polar residues. Composition is skewed to acidic residues over residues 350-366 (SDDD…ESDL) and 376-395 (DGAE…DEEE). Over residues 402–418 (ALNRDNSFASINGQPEQ) the composition is skewed to polar residues. Ser-408 and Ser-411 each carry phosphoserine. Residues 420 to 429 (LQYKEFKEPL) show a composition bias toward basic and acidic residues. The span at 430–455 (ELEDIPIEIGNDDDEDDEDGSGVEYD) shows a compositional bias: acidic residues. Residue Ser-450 is modified to Phosphoserine.

It belongs to the RTT106 family. As to quaternary structure, interacts with the SWI/SNF, RSC and HIR complexes. Interacts with RLF2, SIR4, YTA7 and histones H3 and H4.

The protein localises to the nucleus. It localises to the chromosome. Its function is as follows. Histones H3 and H4 chaperone involved in the nucleosome formation and heterochromatin silencing. Required for the deposition of H3K56ac-carrying H3-H4 complex onto newly-replicated DNA. Plays a role in the transcriptional regulation of the cell-cycle dependent histone genes by directly recruiting the SWI/SNF and RSC chromatin remodeling complexes to the histone genes in a cell cycle dependent manner. In cooperation with HIR and ASF1, creates a repressive structure at the core histone gene promoter and contributes to their repression outside of S phase. Involved in regulation of Ty1 transposition. The chain is Histone chaperone RTT106 (RTT106) from Saccharomyces cerevisiae (strain YJM789) (Baker's yeast).